Reading from the N-terminus, the 691-residue chain is Calcium-binding and coiled-coil domain-containing protein 1 (691 aa).

Residues 1 to 30 (MEESPLSRAPSRGGVNFLNVARTYIPNTKV) are p300 KIX-binding. Positions 1–190 (MEESPLSRAP…VQELERALAT (190 aa)) are N-terminal AD (CTNNB1 binding site). The residue at position 4 (Ser4) is a Phosphoserine. The interval 45–125 (SDWIGIFKVE…FQFREPRPMD (81 aa)) is interaction with GATA1. Coiled coils occupy residues 145-205 (KATV…YKGI), 232-339 (ELED…AELE), and 417-514 (QSVE…ADEK). A C-terminal AD (CTNNB1 binding site); interaction with CCAR1 region spans residues 501 to 691 (RKLEARLEKV…FSTQDPFTFE (191 aa)). The disordered stretch occupies residues 514 to 606 (KWNEDATTED…SEAEDEKSVL (93 aa)). The segment at 653-679 (WKECPICKERFPAESDKDALEDHMDGH) adopts a UBZ1-type zinc-finger fold. Zn(2+) contacts are provided by Cys656, Cys659, His675, and His679.

This sequence belongs to the CALCOCO family. In terms of assembly, part of a calphoglin complex consisting of CALCOCO1, PPA1 and PGM. Interacts with the bHLH-PAS domains of GRIP1, AHR and ARNT. Interacts with CTNNB1 via both its N- and C-terminal regions. Interacts with EP300. Interacts with CCAR1 (via N-terminus) and GATA1.

The protein resides in the cytoplasm. The protein localises to the nucleus. Functions as a coactivator for aryl hydrocarbon and nuclear receptors (NR). Recruited to promoters through its contact with the N-terminal basic helix-loop-helix-Per-Arnt-Sim (PAS) domain of transcription factors or coactivators, such as NCOA2. During ER-activation acts synergistically in combination with other NCOA2-binding proteins, such as EP300, CREBBP and CARM1. Involved in the transcriptional activation of target genes in the Wnt/CTNNB1 pathway. Functions as a secondary coactivator in LEF1-mediated transcriptional activation via its interaction with CTNNB1. Coactivator function for nuclear receptors and LEF1/CTNNB1 involves differential utilization of two different activation regions. In association with CCAR1 enhances GATA1- and MED1-mediated transcriptional activation from the gamma-globin promoter during erythroid differentiation of K562 erythroleukemia cells. Its function is as follows. Seems to enhance inorganic pyrophosphatase thus activating phosphogluomutase (PMG). Probably functions as a component of the calphoglin complex, which is involved in linking cellular metabolism (phosphate and glucose metabolism) with other core functions including protein synthesis and degradation, calcium signaling and cell growth. In Homo sapiens (Human), this protein is Calcium-binding and coiled-coil domain-containing protein 1 (CALCOCO1).